The chain runs to 511 residues: GMP synthase [glutamine-hydrolyzing] (511 aa).

The Glutamine amidotransferase type-1 domain maps to 3-198 (SVLVLDFGSQ…LLNIAAITPD (196 aa)). The active-site Nucleophile is the Cys80. Catalysis depends on residues His172 and Glu174. The GMPS ATP-PPase domain maps to 199 to 386 (WSSKSFIEHQ…LGIPEDILMR (188 aa)). 226-232 (SGGVDST) is a binding site for ATP.

Homodimer.

It carries out the reaction XMP + L-glutamine + ATP + H2O = GMP + L-glutamate + AMP + diphosphate + 2 H(+). It participates in purine metabolism; GMP biosynthesis; GMP from XMP (L-Gln route): step 1/1. Functionally, catalyzes the synthesis of GMP from XMP. The chain is GMP synthase [glutamine-hydrolyzing] from Chlorobium chlorochromatii (strain CaD3).